The primary structure comprises 215 residues: UPF0502 protein YceH (215 aa).

An N6-acetyllysine modification is found at Lys80.

It belongs to the UPF0502 family.

The polypeptide is UPF0502 protein YceH (Escherichia coli O127:H6 (strain E2348/69 / EPEC)).